The following is a 214-amino-acid chain: Pyrrolidone-carboxylate peptidase (214 aa).

Residues Glu-78, Cys-141, and His-165 contribute to the active site.

Belongs to the peptidase C15 family. Homotetramer.

It is found in the cytoplasm. It catalyses the reaction Release of an N-terminal pyroglutamyl group from a polypeptide, the second amino acid generally not being Pro.. Functionally, removes 5-oxoproline from various penultimate amino acid residues except L-proline. The protein is Pyrrolidone-carboxylate peptidase of Streptococcus pneumoniae serotype 2 (strain D39 / NCTC 7466).